A 758-amino-acid polypeptide reads, in one-letter code: Microtubule-associated protein tau (758 aa).

Basic and acidic residues predominate over residues M1–Q26. Residues M1 to V573 are disordered. A2 bears the N-acetylalanine mark. The residue at position 18 (Y18) is a Phosphotyrosine; by FYN. Y29 is modified (phosphotyrosine). K44 participates in a covalent cross-link: Glycyl lysine isopeptide (Lys-Gly) (interchain with G-Cter in ubiquitin). Residues S46 and S61 each carry the phosphoserine modification. Residues S61–T71 are compositionally biased toward polar residues. 2 positions are modified to phosphothreonine: T69 and T71. A glycan (N-linked (Glc) (glycation) lysine; in PHF-tau; in vitro) is linked at K87. Position 111 is a phosphothreonine (T111). Basic and acidic residues-rich tracts occupy residues E179–K189 and G207–E216. S214 is subject to Phosphoserine; by SGK1. A compositionally biased stretch (acidic residues) spans E217–S228. The segment covering E314–G323 has biased composition (basic and acidic residues). Over residues R324–P340 the composition is skewed to low complexity. Basic and acidic residues-rich tracts occupy residues E344 to E356 and K381 to A393. N-linked (Glc) (glycation) lysine; in PHF-tau; in vitro glycosylation occurs at K383. A compositionally biased stretch (low complexity) spans V442 to G453. The span at K455 to T466 shows a compositional bias: basic and acidic residues. N-linked (Glc) (glycation) lysine; in PHF-tau; in vitro glycosylation occurs at K467. T470 bears the Phosphothreonine; by PDPK1 mark. At R472 the chain carries Omega-N-methylarginine. N-linked (Glc) (glycation) lysine; in PHF-tau; in vitro glycosylation occurs at K480. Position 480 is an N6,N6-dimethyllysine; alternate (K480). K480 carries the post-translational modification N6-acetyllysine; alternate. N484 carries the post-translational modification Deamidated asparagine; in tau and PHF-tau; partial. T486 bears the Phosphothreonine mark. An N-linked (Glc) (glycation) lysine; in PHF-tau; in vitro glycan is attached at K491. Over residues K491–G503 the composition is skewed to pro residues. T492 is subject to Phosphothreonine. Residue T498 is modified to Phosphothreonine; by PDPK1. Phosphoserine is present on residues S502, S508, and S512. A compositionally biased stretch (low complexity) spans E504 to S531. Y514 is subject to Phosphotyrosine; by TTBK1. A phosphoserine; by PDPK1 and TTBK1 mark is found at S515 and S516. S519 carries the post-translational modification Phosphoserine; by CK1, PDPK1 and TTBK1. T522 carries the phosphothreonine; by CK1 and PDPK1 modification. S525 carries O-linked (GlcNAc) serine glycosylation. At T529 the chain carries Phosphothreonine; by BRSK1, BRSK2, DYRK2 and PDPK1. S531 is modified (phosphoserine; by PKA). Residue T534 is modified to Phosphothreonine; by PDPK1. Residue K542 is glycosylated (N-linked (Glc) (glycation) lysine; in PHF-tau; in vitro). Position 542 is an N6-acetyllysine (K542). Residue T548 is modified to Phosphothreonine; by GSK3-beta and PDPK1. The N-linked (Glc) (glycation) lysine; in PHF-tau; in vitro glycan is linked to K551. Position 552 is a phosphoserine; by PDPK1 (S552). S554 carries the phosphoserine; by PHK modification. O-linked (GlcNAc) serine glycosylation is present at S555. Tau/MAP repeat units follow at residues Q561–K591, V592–S622, V623–Q653, and V654–N685. The microtubule-binding domain stretch occupies residues Q561–N685. K571 is covalently cross-linked (Glycyl lysine isopeptide (Lys-Gly) (interchain with G-Cter in ubiquitin); in PHF-tau). A glycan (N-linked (Glc) (glycation) lysine; in PHF-tau; in vitro) is linked at K576. At K576 the chain carries N6-acetyllysine; alternate. K576 bears the N6-methyllysine; alternate mark. Residue K576 forms a Glycyl lysine isopeptide (Lys-Gly) (interchain with G-Cter in ubiquitin); alternate linkage. The residue at position 579 (S579) is a Phosphoserine; by MARK1, MARK2, MARK3, MARK4, BRSK1, BRSK2 and PHK. A Glycyl lysine isopeptide (Lys-Gly) (interchain with G-Cter in ubiquitin) cross-link involves residue K584. N596 carries the post-translational modification Deamidated asparagine; in tau and PHF-tau; partial. N-linked (Glc) (glycation) lysine; in PHF-tau; in vitro glycans are attached at residues K597 and K598. The residue at position 598 (K598) is an N6-acetyllysine; alternate. A Glycyl lysine isopeptide (Lys-Gly) (interchain with G-Cter in ubiquitin); alternate cross-link involves residue K598. S602 carries the post-translational modification Phosphoserine; by PHK. K607 bears the N6-acetyllysine mark. A disulfide bridge links C608 with C639. S610 is modified (phosphoserine). K615 is modified (N6-acetyllysine; alternate). Residue K615 forms a Glycyl lysine isopeptide (Lys-Gly) (interchain with G-Cter in ubiquitin); alternate linkage. Position 622 is a phosphoserine; by PHK (S622). At K628 the chain carries N6,N6-dimethyllysine; alternate. N6-acetyllysine; alternate is present on residues K628, K634, and K638. K628 participates in a covalent cross-link: Glycyl lysine isopeptide (Lys-Gly) (interchain with G-Cter in ubiquitin); in PHF-tau. Glycyl lysine isopeptide (Lys-Gly) (interchain with G-Cter in ubiquitin); alternate cross-links involve residues K634 and K638. At S641 the chain carries Phosphoserine. K648, K660, and K664 each carry N6-acetyllysine; alternate. Residues K648, K660, and K664 each participate in a glycyl lysine isopeptide (Lys-Gly) (interchain with G-Cter in ubiquitin); alternate cross-link. Residue K664 is glycosylated (N-linked (Glc) (glycation) lysine; in PHF-tau; in vitro). R666 carries the omega-N-methylarginine modification. Phosphoserine; by PHK is present on S669. The N-linked (Glc) (glycation) lysine; in PHF-tau; in vitro glycan is linked to K670. K670 participates in a covalent cross-link: Glycyl lysine isopeptide (Lys-Gly) (interchain with G-Cter in ubiquitin); in PHF-tau. The residue at position 673 (S673) is a Phosphoserine. N-linked (Glc) (glycation) lysine; in PHF-tau; in vitro glycosylation is present at K686. The residue at position 686 (K686) is an N6-acetyllysine; alternate. K686 is covalently cross-linked (Glycyl lysine isopeptide (Lys-Gly) (interchain with G-Cter in ubiquitin); alternate). A Glycyl lysine isopeptide (Lys-Gly) (interchain with G-Cter in ubiquitin) cross-link involves residue K692. At K702 the chain carries N6-acetyllysine; alternate. A Glycyl lysine isopeptide (Lys-Gly) (interchain with G-Cter in ubiquitin); alternate cross-link involves residue K702. At Y711 the chain carries Phosphotyrosine. Position 713 is a phosphoserine; by CK1 and PDPK1 (S713). The tract at residues V715–I734 is disordered. S717 carries the post-translational modification Phosphoserine; alternate. Residue S717 is glycosylated (O-linked (GlcNAc) serine; alternate). Over residues G718–S733 the composition is skewed to polar residues. T720 is modified (phosphothreonine). Phosphoserine; by CK1 and PDPK1 is present on S721. S726 carries the post-translational modification Phosphoserine. Residue S733 is modified to Phosphoserine; by CaMK2 and TTBK1. The residue at position 739 (S739) is a Phosphoserine; by PDPK1 and TTBK1. At T744 the chain carries Phosphothreonine; by TTBK1.

As to quaternary structure, interacts with MARK1, MARK2, MARK3 and MARK4. Interacts with PSMC2 through SQSTM1. Interacts with SQSTM1 when polyubiquitinated. Interacts with FKBP4. Binds to CSNK1D. Interacts with SGK1. Interacts with EPM2A; the interaction dephosphorylates MAPT at Ser-396. Interacts with PIN1. Interacts with LRRK2. Interacts with LRP1, leading to endocytosis; this interaction is reduced in the presence of LRPAP1/RAP. Phosphorylation at serine and threonine residues in S-P or T-P motifs by proline-directed protein kinases (PDPK1, CDK1, CDK5, GSK3, MAPK) (only 2-3 sites per protein in interphase, seven-fold increase in mitosis, and in the form associated with paired helical filaments (PHF-tau)), and at serine residues in K-X-G-S motifs by MAP/microtubule affinity-regulating kinase (MARK1, MARK2, MARK3 or MARK4), causing detachment from microtubules, and their disassembly. Phosphorylation decreases with age. Phosphorylation within tau/MAP's repeat domain or in flanking regions seems to reduce tau/MAP's interaction with, respectively, microtubules or plasma membrane components. Phosphorylation on Ser-610, Ser-622, Ser-641 and Ser-673 in several isoforms during mitosis. Phosphorylation at Ser-548 by GSK3B reduces ability to bind and stabilize microtubules. Phosphorylation at Ser-579 by BRSK1 and BRSK2 in neurons affects ability to bind microtubules and plays a role in neuron polarization. Phosphorylated at Ser-554, Ser-579, Ser-602, Ser-606 and Ser-669 by PHK. Phosphorylation at Ser-214 by SGK1 mediates microtubule depolymerization and neurite formation in hippocampal neurons. There is a reciprocal down-regulation of phosphorylation and O-GlcNAcylation. Phosphorylation on Ser-717 completely abolishes the O-GlcNAcylation on this site, while phosphorylation on Ser-713 and Ser-721 reduces glycosylation by a factor of 2 and 4 respectively. Phosphorylation on Ser-721 is reduced by about 41.5% by GlcNAcylation on Ser-717. Dephosphorylated at several serine and threonine residues by the serine/threonine phosphatase PPP5C. Post-translationally, polyubiquitinated. Requires functional TRAF6 and may provoke SQSTM1-dependent degradation by the proteasome. PHF-tau can be modified by three different forms of polyubiquitination. 'Lys-48'-linked polyubiquitination is the major form, 'Lys-6'-linked and 'Lys-11'-linked polyubiquitination also occur. In terms of processing, O-glycosylated. O-GlcNAcylation content is around 8.2%. There is reciprocal down-regulation of phosphorylation and O-GlcNAcylation. Phosphorylation on Ser-717 completely abolishes the O-GlcNAcylation on this site, while phosphorylation on Ser-713 and Ser-721 reduces O-GlcNAcylation by a factor of 2 and 4 respectively. O-GlcNAcylation on Ser-717 decreases the phosphorylation on Ser-721 by about 41.5%. Glycation of PHF-tau, but not normal brain TAU/MAPT. Glycation is a non-enzymatic post-translational modification that involves a covalent linkage between a sugar and an amino group of a protein molecule forming ketoamine. Subsequent oxidation, fragmentation and/or cross-linking of ketoamine leads to the production of advanced glycation endproducts (AGES). Glycation may play a role in stabilizing PHF aggregation leading to tangle formation in AD. As to expression, expressed in neurons. Isoform PNS-tau is expressed in the peripheral nervous system while the others are expressed in the central nervous system.

It is found in the cytoplasm. The protein resides in the cytosol. Its subcellular location is the cell membrane. It localises to the cytoskeleton. The protein localises to the cell projection. It is found in the axon. The protein resides in the dendrite. Its subcellular location is the secreted. In terms of biological role, promotes microtubule assembly and stability, and might be involved in the establishment and maintenance of neuronal polarity. The C-terminus binds axonal microtubules while the N-terminus binds neural plasma membrane components, suggesting that tau functions as a linker protein between both. Axonal polarity is predetermined by TAU/MAPT localization (in the neuronal cell) in the domain of the cell body defined by the centrosome. The short isoforms allow plasticity of the cytoskeleton whereas the longer isoforms may preferentially play a role in its stabilization. The chain is Microtubule-associated protein tau from Homo sapiens (Human).